The chain runs to 337 residues: Ribonucleoside-diphosphate reductase small subunit (337 aa).

The interval 1–22 is disordered; the sequence is MDPAVSPASTDPLDTHASGAGA. Residues aspartate 91, glutamate 121, and histidine 124 each coordinate Fe cation. Residue tyrosine 128 is part of the active site. A helical membrane pass occupies residues 177–197; sequence FILMILIEGVFFAASFAAIAY. The Fe cation site is built by glutamate 184, glutamate 218, and histidine 221.

This sequence belongs to the ribonucleoside diphosphate reductase small chain family. As to quaternary structure, heterotetramer composed of a homodimer of the large subunit (R1) and a homodimer of the small subunit (R2). Larger multisubunit protein complex are also active, composed of (R1)n(R2)n. Requires Fe cation as cofactor.

The protein localises to the host membrane. The catalysed reaction is a 2'-deoxyribonucleoside 5'-diphosphate + [thioredoxin]-disulfide + H2O = a ribonucleoside 5'-diphosphate + [thioredoxin]-dithiol. In terms of biological role, ribonucleoside-diphosphate reductase holoenzyme provides the precursors necessary for viral DNA synthesis. Allows virus growth in non-dividing cells, as well as reactivation from latency in infected hosts. Catalyzes the biosynthesis of deoxyribonucleotides from the corresponding ribonucleotides. The sequence is that of Ribonucleoside-diphosphate reductase small subunit from Human herpesvirus 2 (strain 333) (HHV-2).